Here is a 276-residue protein sequence, read N- to C-terminus: MHPAAEHSPLGKSSEYIATYTPSLLFPIPRAAKWAELGLTAQTLPYQGVDFWNCYELSWLLPSGKPVVAIGEFSIPAESPNIIESKSFKLYLNSLNQTAFATVEQLQTTLEQDLSAAAGKPVGVRIRSLAEIEEEGVAALPGVCIDDLDISVSSYDRPQPELLCCDDSRVVAESVHSHLLKSNCPVTSQPDWGSVVVEYRGAALDHASLLAYIVSFRQHSDFHEQCVERIFLDLQRLLKPEKLTVYARYVRRGGLDINPYRSTETLDVDNRRLARQ.

Residue 83 to 85 (IES) participates in substrate binding. 85-86 (SK) serves as a coordination point for NADPH. Cys184 acts as the Thioimide intermediate in catalysis. The active-site Proton donor is Asp191. 223-224 (HE) is a binding site for substrate. 252 to 253 (RG) provides a ligand contact to NADPH.

This sequence belongs to the GTP cyclohydrolase I family. QueF type 2 subfamily. Homodimer.

Its subcellular location is the cytoplasm. The enzyme catalyses 7-aminomethyl-7-carbaguanine + 2 NADP(+) = 7-cyano-7-deazaguanine + 2 NADPH + 3 H(+). The protein operates within tRNA modification; tRNA-queuosine biosynthesis. Catalyzes the NADPH-dependent reduction of 7-cyano-7-deazaguanine (preQ0) to 7-aminomethyl-7-deazaguanine (preQ1). This is NADPH-dependent 7-cyano-7-deazaguanine reductase from Pseudomonas syringae pv. syringae (strain B728a).